Consider the following 264-residue polypeptide: Thymidylate synthase (264 aa).

DUMP is bound by residues Arg21 and 126–127; that span reads RR. Cys146 acts as the Nucleophile in catalysis. DUMP contacts are provided by residues 166 to 169, Asn177, and 207 to 209; these read RSAD and HLY. Residue Asp169 participates in (6R)-5,10-methylene-5,6,7,8-tetrahydrofolate binding. Ala263 lines the (6R)-5,10-methylene-5,6,7,8-tetrahydrofolate pocket.

It belongs to the thymidylate synthase family. Bacterial-type ThyA subfamily. In terms of assembly, homodimer.

Its subcellular location is the cytoplasm. The catalysed reaction is dUMP + (6R)-5,10-methylene-5,6,7,8-tetrahydrofolate = 7,8-dihydrofolate + dTMP. Its pathway is pyrimidine metabolism; dTTP biosynthesis. Its function is as follows. Catalyzes the reductive methylation of 2'-deoxyuridine-5'-monophosphate (dUMP) to 2'-deoxythymidine-5'-monophosphate (dTMP) while utilizing 5,10-methylenetetrahydrofolate (mTHF) as the methyl donor and reductant in the reaction, yielding dihydrofolate (DHF) as a by-product. This enzymatic reaction provides an intracellular de novo source of dTMP, an essential precursor for DNA biosynthesis. The chain is Thymidylate synthase from Afipia carboxidovorans (strain ATCC 49405 / DSM 1227 / KCTC 32145 / OM5) (Oligotropha carboxidovorans).